A 265-amino-acid polypeptide reads, in one-letter code: Ribonuclease 3 (265 aa).

The RNase III domain maps to 34-157; that stretch reads LAVLTRKLGY…LIGAIYLDSQ (124 aa). Glu70 is a Mg(2+) binding site. Asp74 is a catalytic residue. Mg(2+) contacts are provided by Asp143 and Glu146. The active site involves Glu146. Positions 185 to 256 constitute a DRBM domain; sequence DAKSRLQEWL…AELMINQLHK (72 aa).

The protein belongs to the ribonuclease III family. Homodimer. It depends on Mg(2+) as a cofactor.

It is found in the cytoplasm. It catalyses the reaction Endonucleolytic cleavage to 5'-phosphomonoester.. Digests double-stranded RNA. Involved in the processing of primary rRNA transcript to yield the immediate precursors to the large and small rRNAs (23S and 16S). Processes some mRNAs, and tRNAs when they are encoded in the rRNA operon. Processes pre-crRNA and tracrRNA of type II CRISPR loci if present in the organism. This is Ribonuclease 3 from Psychrobacter arcticus (strain DSM 17307 / VKM B-2377 / 273-4).